A 229-amino-acid chain; its full sequence is UPF0173 metal-dependent hydrolase RD1_1994 (229 aa).

The protein belongs to the UPF0173 family.

The sequence is that of UPF0173 metal-dependent hydrolase RD1_1994 from Roseobacter denitrificans (strain ATCC 33942 / OCh 114) (Erythrobacter sp. (strain OCh 114)).